A 637-amino-acid chain; its full sequence is Biosynthetic arginine decarboxylase (637 aa).

K101 is subject to N6-(pyridoxal phosphate)lysine. Position 286 to 296 (F286 to Y296) interacts with substrate.

This sequence belongs to the Orn/Lys/Arg decarboxylase class-II family. SpeA subfamily. The cofactor is Mg(2+). Requires pyridoxal 5'-phosphate as cofactor.

It catalyses the reaction L-arginine + H(+) = agmatine + CO2. Its pathway is amine and polyamine biosynthesis; agmatine biosynthesis; agmatine from L-arginine: step 1/1. Catalyzes the biosynthesis of agmatine from arginine. In Shewanella piezotolerans (strain WP3 / JCM 13877), this protein is Biosynthetic arginine decarboxylase.